Here is a 452-residue protein sequence, read N- to C-terminus: UDP-N-acetylmuramoylalanine--D-glutamate ligase (452 aa).

ATP is bound at residue 119–125; that stretch reads GSNGKTT.

Belongs to the MurCDEF family.

It localises to the cytoplasm. It carries out the reaction UDP-N-acetyl-alpha-D-muramoyl-L-alanine + D-glutamate + ATP = UDP-N-acetyl-alpha-D-muramoyl-L-alanyl-D-glutamate + ADP + phosphate + H(+). It functions in the pathway cell wall biogenesis; peptidoglycan biosynthesis. Its function is as follows. Cell wall formation. Catalyzes the addition of glutamate to the nucleotide precursor UDP-N-acetylmuramoyl-L-alanine (UMA). This is UDP-N-acetylmuramoylalanine--D-glutamate ligase from Streptococcus pyogenes serotype M28 (strain MGAS6180).